Reading from the N-terminus, the 113-residue chain is Ig kappa chain V-II region 7S34.1 (113 aa).

The segment at 1–23 is framework-1; that stretch reads DIVMTQTAPSALVTPGESVSISC. Cysteine 23 and cysteine 93 are disulfide-bonded. The segment at 24–39 is complementarity-determining-1; that stretch reads RSSKSLLHSNGNTYLY. The framework-2 stretch occupies residues 40-54; the sequence is WFLQRPGQCPQLLIY. Residues 55-61 form a complementarity-determining-2 region; sequence RMSNLAS. Residues 62-93 are framework-3; sequence GVPDRFSGSGSGTAFTLRISRVEAEDVGVYYC. A complementarity-determining-3 region spans residues 94–102; the sequence is MQQREYPYT. The framework-4 stretch occupies residues 103–112; it reads FGGGTKLEIK.

The protein is Ig kappa chain V-II region 7S34.1 of Mus musculus (Mouse).